The following is a 285-amino-acid chain: Glutamate racemase (285 aa).

Substrate contacts are provided by residues 30-31 and 62-63; these read DS and YG. The Proton donor/acceptor role is filled by Cys94. A substrate-binding site is contributed by 95–96; it reads NT. The Proton donor/acceptor role is filled by Cys206. 207–208 lines the substrate pocket; sequence TH.

It belongs to the aspartate/glutamate racemases family.

It carries out the reaction L-glutamate = D-glutamate. It functions in the pathway cell wall biogenesis; peptidoglycan biosynthesis. Its function is as follows. Provides the (R)-glutamate required for cell wall biosynthesis. The protein is Glutamate racemase of Pectobacterium carotovorum subsp. carotovorum (strain PC1).